Consider the following 608-residue polypeptide: X-ray repair cross-complementing protein 6 (608 aa).

Positions 1–11 (MSEWESYYKTE) are enriched in basic and acidic residues. The interval 1 to 29 (MSEWESYYKTEGEEEEEEEESPDTGGEYK) is disordered. Serine 2 carries the N-acetylserine modification. Serine 2 carries the phosphoserine modification. A Phosphoserine; by PRKDC modification is found at serine 6. Positions 12–22 (GEEEEEEEESP) are enriched in acidic residues. Lysine 29 acts as the Schiff-base intermediate with DNA; for 5'-deoxyribose-5-phosphate lyase activity in catalysis. Lysine 29 is modified (N6-acetyllysine). Serine 49 is subject to Phosphoserine; by PRKDC. One can recognise a Ku domain in the interval 259–466 (FKLGEDVVLM…IDKMKAIVQK (208 aa)). Residues 275–339 (VQKANKPFPV…EETEELKRFD (65 aa)) form a DNA-binding region. Lysine 315 participates in a covalent cross-link: Glycyl lysine isopeptide (Lys-Gly) (interchain with G-Cter in SUMO2). N6-acetyllysine is present on residues lysine 329, lysine 336, and lysine 459. The tract at residues 371 to 480 (SLVSGSSTLF…YRSDSFENPV (110 aa)) is interaction with XRCC5. Phosphoserine is present on residues serine 475, serine 518, and serine 548. A disordered region spans residues 534–557 (PEGKVAKRKQDDEGSTSKKPKVEL). A compositionally biased stretch (basic and acidic residues) spans 537-557 (KVAKRKQDDEGSTSKKPKVEL). The segment at 548 to 607 (STSKKPKVELSEEELKAHFRKGTLGKLTVPTLKDICKAHGLKSGPKKQELLDALIRHLEK) is interaction with DEAF1. Lysine 554 participates in a covalent cross-link: Glycyl lysine isopeptide (Lys-Gly) (interchain with G-Cter in SUMO2). At serine 558 the chain carries Phosphoserine. An N6,N6,N6-trimethyllysine modification is found at lysine 568. The 35-residue stretch at 571-605 (LGKLTVPTLKDICKAHGLKSGPKKQELLDALIRHL) folds into the SAP domain. The tract at residues 576-581 (VPTLKD) is interaction with BAX.

Belongs to the ku70 family. As to quaternary structure, heterodimer composed of XRCC5/Ku80 and XRCC6/Ku70. Component of the core long-range non-homologous end joining (NHEJ) complex (also named DNA-PK complex) composed of PRKDC, LIG4, XRCC4, XRCC6/Ku70, XRCC5/Ku86 and NHEJ1/XLF. Additional component of the NHEJ complex includes PAXX. Following autophosphorylation, PRKDC dissociates from DNA, leading to formation of the short-range NHEJ complex, composed of LIG4, XRCC4, XRCC6/Ku70, XRCC5/Ku86 and NHEJ1/XLF. The XRCC5-XRCC6 dimer also associates with NAA15, and this complex binds to the osteocalcin promoter and activates osteocalcin expression. In addition, XRCC6 interacts with the osteoblast-specific transcription factors MSX2, RUNX2 and DLX5. Interacts with ELF3. Interacts with ATP23. The XRCC5-XRRC6 dimer associates in a DNA-dependent manner with APEX1. Binds to CDK9. Identified in a complex with DEAF1 and XRCC5. Interacts with DEAF1 (via the SAND domain); the interaction is direct and may be inhibited by DNA-binding. Interacts with CLU. Interacts with NR4A3; the DNA-dependent protein kinase complex DNA-PK phosphorylates and activates NR4A3 and prevents NR4A3 ubiquitinylation and degradation. Interacts with CYREN (via KBM motif). Interacts (via N-terminus) with HSF1 (via N-terminus); this interaction is direct and prevents XRCC5/XRCC6 heterodimeric binding and non-homologous end joining (NHEJ) repair activities induced by ionizing radiation (IR). Part of the HDP-RNP complex composed of at least HEXIM1, PRKDC, XRCC5, XRCC6, paraspeckle proteins (SFPQ, NONO, PSPC1, RBM14, and MATR3) and NEAT1 RNA. Interacts with HMBOX1. Interacts with ATF7. Interacts with APLF (via KBM motif). Interacts with WRN (via KBM motif). The XRCC5-XRCC6 dimer associates with ALKBH2. Interacts with TPRN; TPRN interacts with a number of DNA damage response proteins, is recruited to sites of DNA damage and may play a role in DNA damage repair. When not acetylated, interacts with BAX. Interacts with ERCC6L2. Phosphorylation by PRKDC may enhance helicase activity. Phosphorylation of Ser-49 does not affect DNA repair. In terms of processing, ADP-ribosylated by PARP3. Post-translationally, methylation by SETD4 leads to accumulation in the cytoplasm and is a prerequisite for acetylation, possibly due to the change of subcellular from the nucleus to the cytosol initiated by methylation, acetylation occurring in the cytosol. Acetylation can be catalyzed in vitro by CREBBP/CBP and KAT2B/PCAF.

The protein resides in the nucleus. Its subcellular location is the chromosome. It localises to the cytoplasm. Its function is as follows. Single-stranded DNA-dependent ATP-dependent helicase that plays a key role in DNA non-homologous end joining (NHEJ) by recruiting DNA-PK to DNA. Required for double-strand break repair and V(D)J recombination. Also has a role in chromosome translocation. Has a role in chromosome translocation. The DNA helicase II complex binds preferentially to fork-like ends of double-stranded DNA in a cell cycle-dependent manner. It works in the 3'-5' direction. During NHEJ, the XRCC5-XRRC6 dimer performs the recognition step: it recognizes and binds to the broken ends of the DNA and protects them from further resection. Binding to DNA may be mediated by XRCC6. The XRCC5-XRRC6 dimer acts as a regulatory subunit of the DNA-dependent protein kinase complex DNA-PK by increasing the affinity of the catalytic subunit PRKDC to DNA by 100-fold. The XRCC5-XRRC6 dimer is probably involved in stabilizing broken DNA ends and bringing them together. The assembly of the DNA-PK complex to DNA ends is required for the NHEJ ligation step. Probably also acts as a 5'-deoxyribose-5-phosphate lyase (5'-dRP lyase), by catalyzing the beta-elimination of the 5' deoxyribose-5-phosphate at an abasic site near double-strand breaks. 5'-dRP lyase activity allows to 'clean' the termini of abasic sites, a class of nucleotide damage commonly associated with strand breaks, before such broken ends can be joined. The XRCC5-XRRC6 dimer together with APEX1 acts as a negative regulator of transcription. In association with NAA15, the XRCC5-XRRC6 dimer binds to the osteocalcin promoter and activates osteocalcin expression. Plays a role in the regulation of DNA virus-mediated innate immune response by assembling into the HDP-RNP complex, a complex that serves as a platform for IRF3 phosphorylation and subsequent innate immune response activation through the cGAS-STING pathway. Negatively regulates apoptosis by interacting with BAX and sequestering it from the mitochondria. Might have deubiquitination activity, acting on BAX. The protein is X-ray repair cross-complementing protein 6 (Xrcc6) of Mus musculus (Mouse).